Reading from the N-terminus, the 83-residue chain is Keratin-associated protein 6-1 (83 aa).

Residues 9-15 (YGGLGCG) form an RPT 1-1 repeat. An RPT 1-2 repeat occupies 19-25 (YGGLGCG). Residues 44–55 (GYGYGSRSLCGS) form an RPT 2-1 repeat. The RPT 2-2 repeat unit spans residues 56 to 67 (GYGYGSRSLCGS).

The protein belongs to the KRTAP type 6 family. Interacts with wool keratins.

Its function is as follows. In the wool cortex, wool keratin intermediate filaments are embedded in an interfilamentous matrix, consisting of hair keratin-associated proteins (KRTAP), which are essential for the formation of a rigid and resistant wool shaft through their extensive disulfide bond cross-linking with abundant cysteine residues of wool keratins. The matrix proteins include the high-sulfur and high-glycine-tyrosine keratins. In Ovis aries (Sheep), this protein is Keratin-associated protein 6-1 (KRTAP6-1).